Reading from the N-terminus, the 505-residue chain is Trans-cinnamate 4-monooxygenase (505 aa).

A helical transmembrane segment spans residues 3–23; that stretch reads LLLLEKSLIAVFVAVILATVI. Residues 213 to 218 and Ala-306 each bind (E)-cinnamate; that span reads RSRLAQ. Residue Cys-447 participates in heme binding.

This sequence belongs to the cytochrome P450 family. Heme serves as cofactor. In terms of tissue distribution, expressed in roots, leaves, stems, flowers and siliques.

Its subcellular location is the membrane. The enzyme catalyses (E)-cinnamate + reduced [NADPH--hemoprotein reductase] + O2 = (E)-4-coumarate + oxidized [NADPH--hemoprotein reductase] + H2O + H(+). It participates in phenylpropanoid metabolism; trans-4-coumarate biosynthesis; trans-4-coumarate from trans-cinnamate: step 1/1. Its function is as follows. Catalyzes the first oxidative step of the phenylpropanoid pathway in higher plants by transforming trans-cinnamate into p-coumarate. The compounds formed by this pathway are essential components for lignification, pollination, and defense against ultraviolet light, predators and pathogens. This chain is Trans-cinnamate 4-monooxygenase, found in Arabidopsis thaliana (Mouse-ear cress).